The following is a 508-amino-acid chain: Photosystem II CP47 reaction center protein (508 aa).

The next 6 helical transmembrane spans lie at 21–36, 101–115, 140–156, 203–218, 237–252, and 457–472; these read SVHI…WAGS, IVFS…IWHW, GIHL…FGAF, IAAG…FHLS, VLSS…AFVV, and SFAL…HGAR.

The protein belongs to the PsbB/PsbC family. PsbB subfamily. In terms of assembly, PSII is composed of 1 copy each of membrane proteins PsbA, PsbB, PsbC, PsbD, PsbE, PsbF, PsbH, PsbI, PsbJ, PsbK, PsbL, PsbM, PsbT, PsbX, PsbY, PsbZ, Psb30/Ycf12, at least 3 peripheral proteins of the oxygen-evolving complex and a large number of cofactors. It forms dimeric complexes. Binds multiple chlorophylls. PSII binds additional chlorophylls, carotenoids and specific lipids. serves as cofactor.

Its subcellular location is the plastid. It localises to the chloroplast thylakoid membrane. Functionally, one of the components of the core complex of photosystem II (PSII). It binds chlorophyll and helps catalyze the primary light-induced photochemical processes of PSII. PSII is a light-driven water:plastoquinone oxidoreductase, using light energy to abstract electrons from H(2)O, generating O(2) and a proton gradient subsequently used for ATP formation. The chain is Photosystem II CP47 reaction center protein from Vitis vinifera (Grape).